The primary structure comprises 512 residues: 2-isopropylmalate synthase (512 aa).

The Pyruvate carboxyltransferase domain maps to 4–266 (IEIFDTTLRD…TTKLNLKEIA (263 aa)). Mn(2+) contacts are provided by Asp13, His201, His203, and Asn237. The tract at residues 390-512 (QLESVQLAYG…GEPTPVSATI (123 aa)) is regulatory domain.

Belongs to the alpha-IPM synthase/homocitrate synthase family. LeuA type 1 subfamily. As to quaternary structure, homodimer. It depends on Mn(2+) as a cofactor.

The protein resides in the cytoplasm. The catalysed reaction is 3-methyl-2-oxobutanoate + acetyl-CoA + H2O = (2S)-2-isopropylmalate + CoA + H(+). Its pathway is amino-acid biosynthesis; L-leucine biosynthesis; L-leucine from 3-methyl-2-oxobutanoate: step 1/4. Catalyzes the condensation of the acetyl group of acetyl-CoA with 3-methyl-2-oxobutanoate (2-ketoisovalerate) to form 3-carboxy-3-hydroxy-4-methylpentanoate (2-isopropylmalate). The chain is 2-isopropylmalate synthase from Brevibacillus brevis (strain 47 / JCM 6285 / NBRC 100599).